The following is a 370-amino-acid chain: Sodium-dependent organic anion transporter (370 aa).

The interval 1 to 24 (MSADCEGNSTCPANSTEEDPPVGM) is disordered. Residues 1–32 (MSADCEGNSTCPANSTEEDPPVGMEGQGSLKL) are Extracellular-facing. 2 N-linked (GlcNAc...) asparagine glycosylation sites follow: N8 and N14. Residues 33–53 (VFTVLSAVMVGLVMFSFGCSV) form a helical membrane-spanning segment. The Cytoplasmic portion of the chain corresponds to 54–67 (ESRKLWLHLRRPWG). Residues 68 to 88 (IAVGLLCQFGLMPLTAYLLAI) traverse the membrane as a helical segment. Topologically, residues 89 to 97 (GFGLKPFQA) are extracellular. Residues 98 to 118 (IAVLIMGSCPGGTVSNVLTFW) form a helical membrane-spanning segment. Topologically, residues 119 to 126 (VDGDMDLS) are cytoplasmic. Residues 127–147 (ISMTTCSTVAALGMMPLCLYV) form a helical membrane-spanning segment. Topologically, residues 148–159 (YTRSWTLPQSLT) are extracellular. A helical membrane pass occupies residues 160–180 (IPYQSIGITLVSLVVPVASGI). Over 181–195 (YVNYRWPKQATFILK) the chain is Cytoplasmic. The chain crosses the membrane as a helical span at residues 196-216 (VGAAVGGMLLLVVAVTGVVLA). The Extracellular segment spans residues 217–224 (KGWNIDVT). A helical transmembrane segment spans residues 225-245 (LLVISCIFPLVGHVMGFLLAF). Residues 246 to 265 (LTHQSWQRCRTISIETGAQN) are Cytoplasmic-facing. A helical transmembrane segment spans residues 266–283 (IQLCIAMMQLSFSAEYLV). Residue Q284 is a topological domain, extracellular. A helical membrane pass occupies residues 285–305 (LLNFALAYGLFQVLHGLLIVA). The Cytoplasmic segment spans residues 306 to 370 (AYQAYKRRQK…ELTSHVPSCE (65 aa)).

It belongs to the bile acid:sodium symporter (BASS) (TC 2.A.28) family. In terms of processing, glycosylated. In terms of tissue distribution, highly expressed in heart, lung, spleen and adrenal gland. Moderately expressed in skeletal muscle, testis and small intestine.

It is found in the membrane. The enzyme catalyses estrone 3-sulfate(out) + 2 Na(+)(out) = estrone 3-sulfate(in) + 2 Na(+)(in). It catalyses the reaction 17beta-estradiol 3-sulfate(out) + 2 Na(+)(out) = 17beta-estradiol 3-sulfate(in) + 2 Na(+)(in). It carries out the reaction dehydroepiandrosterone 3-sulfate(out) + 2 Na(+)(out) = dehydroepiandrosterone 3-sulfate(in) + 2 Na(+)(in). The catalysed reaction is androst-5-ene-diol 3-sulfate(out) + 2 Na(+)(out) = androst-5-ene-diol 3-sulfate(in) + 2 Na(+)(in). The enzyme catalyses pregnenolone sulfate(out) + 2 Na(+)(out) = pregnenolone sulfate(in) + 2 Na(+)(in). It catalyses the reaction taurolithocholate 3-sulfate(out) + 2 Na(+)(out) = taurolithocholate 3-sulfate(in) + 2 Na(+)(in). It carries out the reaction androsterone 3alpha-sulfate(out) + 2 Na(+)(out) = androsterone 3alpha-sulfate(in) + 2 Na(+)(in). The catalysed reaction is 5alpha-dihydrotestosterone sulfate(out) + 2 Na(+)(out) = 5alpha-dihydrotestosterone sulfate(in) + 2 Na(+)(in). The enzyme catalyses 17beta-estradiol 17-sulfate(out) + 2 Na(+)(out) = 17beta-estradiol 17-sulfate(in) + 2 Na(+)(in). It catalyses the reaction 17alpha-hydroxypregnenolone 3-sulfate(out) + 2 Na(+)(out) = 17alpha-hydroxypregnenolone 3-sulfate(in) + 2 Na(+)(in). It carries out the reaction epiandrosterone 3-sulfate(out) + 2 Na(+)(out) = epiandrosterone 3-sulfate(in) + 2 Na(+)(in). The catalysed reaction is epitestosterone 17-sulfate(out) + 2 Na(+)(out) = epitestosterone 17-sulfate(in) + 2 Na(+)(in). The enzyme catalyses testosterone 17-sulfate(out) + 2 Na(+)(out) = testosterone 17-sulfate(in) + 2 Na(+)(in). It catalyses the reaction 16alpha-hydroxydehydroepiandrosterone 3-sulfate(out) + 2 Na(+)(out) = 16alpha-hydroxydehydroepiandrosterone 3-sulfate(in) + 2 Na(+)(in). Functionally, transports sulfoconjugated steroid hormones from the extracellular compartment into the cytosol in a sodium-dependent manner without hydrolysis. Steroid sulfate hormones are commonly considered to be biologically inactive metabolites, that may be activated by steroid sulfatases into free steroids. May play an important role by delivering sulfoconjugated steroids to specific target cells in reproductive organs. May play a role transporting the estriol precursor 16alpha-hydroxydehydroepiandrosterone 3-sulfate (16a-OH-DHEAS) at the fetal blood vessel endothelium. Can also transport other sulfoconjugated molecules such as taurolithocholic acid-3-sulfate and sulfoconjugated pyrenes. This is Sodium-dependent organic anion transporter (Slc10a6) from Rattus norvegicus (Rat).